A 912-amino-acid polypeptide reads, in one-letter code: Vomeronasal type-2 receptor 1 (912 aa).

A signal peptide spans 1–21; sequence MASRQISLALGFLAFLWAVLG. Topologically, residues 22–623 are extracellular; sequence AQNKTEEVQC…LAYGEALGFT (602 aa). Asn-24, Asn-38, Asn-299, and Asn-386 each carry an N-linked (GlcNAc...) asparagine glycan. Residues 624–644 form a helical membrane-spanning segment; that stretch reads LVILSIFGALVVLAVTVVYVI. At 645–657 the chain is on the cytoplasmic side; sequence HRHTPLVKANDRE. Residues 658 to 678 traverse the membrane as a helical segment; sequence LSFLIQMSLVITVLSSLLFIG. The Extracellular portion of the chain corresponds to 679-691; sequence KPCNWSCMARQIT. Residues 692-712 traverse the membrane as a helical segment; the sequence is LALGFCLCLSSILGKTISLFF. At 713–732 the chain is on the cytoplasmic side; the sequence is AYRISVSKTRLISMHPIFRK. The helical transmembrane segment at 733-753 threads the bilayer; sequence LIVLVCVVGEIGVCAAYLVLE. At 754-778 the chain is on the extracellular side; that stretch reads PPRMFKNIEIQNVKIIFECNEGSVE. Residues 779-799 traverse the membrane as a helical segment; it reads FLCSIFGFDVLRALLCFLTTF. Over 800 to 812 the chain is Cytoplasmic; the sequence is VARQLPDNYYEGK. Residues 813–833 traverse the membrane as a helical segment; it reads CITFGMLVFFIVWISFVPAYL. Topologically, residues 834 to 840 are extracellular; it reads STKGKFK. Residues 841-861 traverse the membrane as a helical segment; the sequence is VAVEIFAILASSYGLLGCLFL. Over 862–912 the chain is Cytoplasmic; that stretch reads PKCFIILLRPKRNTDETVGGRVPTVDRSIQLTSASVSSELNSTTVSTVLDE.

This sequence belongs to the G-protein coupled receptor 3 family. In terms of tissue distribution, expressed at the sensory surface of the vomeronasal organ.

It localises to the cell membrane. Putative pheromone receptor. The sequence is that of Vomeronasal type-2 receptor 1 (Vmn2r1) from Mus musculus (Mouse).